The sequence spans 889 residues: Translation initiation factor IF-2 (889 aa).

Residues 115–236 (EAEAQAKAEA…EAERYSDHHI (122 aa)) are compositionally biased toward basic and acidic residues. Positions 115-293 (EAEAQAKAEA…RNRSTAPESM (179 aa)) are disordered. Residues 257–270 (GRRARNKNTAKTKR) show a composition bias toward basic residues. A compositionally biased stretch (basic and acidic residues) spans 271-280 (GGKDARDGRE). The tr-type G domain occupies 389–558 (PRAPVVTIMG…LLQAEVLELK (170 aa)). Residues 398–405 (GHVDHGKT) are G1. GTP is bound at residue 398–405 (GHVDHGKT). The segment at 423–427 (GITQH) is G2. Residues 444 to 447 (DTPG) form a G3 region. Residues 444 to 448 (DTPGH) and 498 to 501 (NKMD) contribute to the GTP site. The G4 stretch occupies residues 498 to 501 (NKMD). Positions 534-536 (SAK) are G5.

The protein belongs to the TRAFAC class translation factor GTPase superfamily. Classic translation factor GTPase family. IF-2 subfamily.

The protein localises to the cytoplasm. Its function is as follows. One of the essential components for the initiation of protein synthesis. Protects formylmethionyl-tRNA from spontaneous hydrolysis and promotes its binding to the 30S ribosomal subunits. Also involved in the hydrolysis of GTP during the formation of the 70S ribosomal complex. The sequence is that of Translation initiation factor IF-2 from Shewanella sp. (strain ANA-3).